A 552-amino-acid chain; its full sequence is Membrane protein insertase YidC (552 aa).

5 helical membrane passes run 7-24 (VLWV…DNWQ), 364-384 (WGWA…PLSA), 434-454 (LPVV…LASV), 473-493 (PFFI…SLNP), and 508-528 (PIAF…YYVV).

This sequence belongs to the OXA1/ALB3/YidC family. Type 1 subfamily. As to quaternary structure, interacts with the Sec translocase complex via SecD. Specifically interacts with transmembrane segments of nascent integral membrane proteins during membrane integration.

It is found in the cell inner membrane. Required for the insertion and/or proper folding and/or complex formation of integral membrane proteins into the membrane. Involved in integration of membrane proteins that insert both dependently and independently of the Sec translocase complex, as well as at least some lipoproteins. Aids folding of multispanning membrane proteins. This chain is Membrane protein insertase YidC, found in Burkholderia cenocepacia (strain HI2424).